We begin with the raw amino-acid sequence, 60 residues long: UPF0434 protein KPN78578_09190 (60 aa).

It belongs to the UPF0434 family.

The polypeptide is UPF0434 protein KPN78578_09190 (Klebsiella pneumoniae subsp. pneumoniae (strain ATCC 700721 / MGH 78578)).